The chain runs to 1357 residues: Ubiquitin carboxyl-terminal hydrolase 19 (1357 aa).

Disordered regions lie at residues 1–52, 162–239, and 275–296; these read MSAG…PTKD, LSPI…SDSA, and VSPRSDSVSPVMIRNRDPEKDD. Residues 1–1330 lie on the Cytoplasmic side of the membrane; sequence MSAGTSATGP…TTSDEGCLRY (1330 aa). Composition is skewed to basic and acidic residues over residues 28-52 and 171-182; these read DRANQESKDGDPRRVSMPRKEPTKD and SEPRRAKQEARN. The region spanning 51 to 140 is the CS 1 domain; that stretch reads KDELLLDWRQ…VPLLTWPSLL (90 aa). The segment covering 194-206 has biased composition (low complexity); it reads SGASPGAQAGPSA. Residues Ser221 and Ser283 each carry the phosphoserine modification. A CS 2 domain is found at 321-423; sequence LAFVKNDSYE…RQSQRWGGLE (103 aa). Residues 432–479 form a disordered region; the sequence is AKVAVPTGPTPLDSTPPGGGPLPLTGQEEARAVEKEKPKARSEDSGLD. Residues 437 to 457 show a composition bias toward low complexity; sequence PTGPTPLDSTPPGGGPLPLTG. Positions 459–475 are enriched in basic and acidic residues; that stretch reads EEARAVEKEKPKARSED. The 718-residue stretch at 536-1253 folds into the USP domain; the sequence is TGLVNLGNTC…YAYVLFYRRR (718 aa). The Nucleophile role is filled by Cys545. Zn(2+) contacts are provided by Cys830, Cys833, Cys847, Cys850, Cys856, Cys860, His868, and Cys872. An MYND-type zinc finger spans residues 830–872; that stretch reads CAACQRKQQSEDEKLKRCTRCYRVGYCNQFCQKTHWPDHKGLC. The segment at 962 to 981 is disordered; that stretch reads DTGAHRMWPPADRGPVPSTS. His1204 serves as the catalytic Proton acceptor. The segment covering 1259-1271 has biased composition (basic and acidic residues); the sequence is RPPRAAHAEHHPD. 2 disordered regions span residues 1259-1278 and 1292-1320; these read RPPRAAHAEHHPDLGPAAEA and AEEEMVPEGPGPLGPWGPQDWVGPPPRGP. Residues 1331 to 1351 form a helical membrane-spanning segment; it reads FVLGTVAALVALVLNVFYPLV. The Lumenal portion of the chain corresponds to 1352–1357; sequence SQSRWR.

In terms of assembly, interacts with RNF123. Interacts with BIRC2/c-IAP1, BIRC3/c-IAP2 and XIAP/BIRC4. Interacts with HIF1A (via N-terminus). Expressed in testis, heart, kidney and skeletal muscle. Low levels of expression are detectable in all other tissues screened.

Its subcellular location is the endoplasmic reticulum membrane. The enzyme catalyses Thiol-dependent hydrolysis of ester, thioester, amide, peptide and isopeptide bonds formed by the C-terminal Gly of ubiquitin (a 76-residue protein attached to proteins as an intracellular targeting signal).. Functionally, deubiquitinating enzyme that regulates the degradation of various proteins by removing ubiquitin moieties, thereby preventing their proteasomal degradation. Stabilizes RNF123, which promotes CDKN1B degradation and contributes to cell proliferation. Decreases the levels of ubiquitinated proteins during skeletal muscle formation and acts to repress myogenesis. Modulates transcription of major myofibrillar proteins. Also involved in turnover of endoplasmic-reticulum-associated degradation (ERAD) substrates. Mechanistically, deubiquitinates and thereby stabilizes several E3 ligases involved in the ERAD pathway including SYVN1 or MARCHF6. Regulates the stability of other E3 ligases including BIRC2/c-IAP1 and BIRC3/c-IAP2 by preventing their ubiquitination. Required for cells to mount an appropriate response to hypoxia by rescuing HIF1A from degradation in a non-catalytic manner and by mediating the deubiquitination of FUNDC1. Attenuates mitochondrial damage and ferroptosis by targeting and stabilizing NADPH oxidase 4/NOX4. Negatively regulates TNF-alpha- and IL-1beta-triggered NF-kappa-B activation by hydrolyzing 'Lys-27'- and 'Lys-63'-linked polyubiquitin chains from MAP3K7. Modulates also the protein level and aggregation of polyQ-expanded huntingtin/HTT through HSP90AA1. The chain is Ubiquitin carboxyl-terminal hydrolase 19 (Usp19) from Rattus norvegicus (Rat).